The sequence spans 434 residues: Probable glucuronosyltransferase Os02g0520750 (434 aa).

Over 1–10 the chain is Cytoplasmic; sequence MVGARAGRVP. The chain crosses the membrane as a helical; Signal-anchor for type II membrane protein span at residues 11–31; sequence AAAAAAAAVLIVAACVFSSLA. Topologically, residues 32-434 are lumenal; the sequence is GAAAAAEVVG…GPVADLKPWK (403 aa). N-linked (GlcNAc...) asparagine glycans are attached at residues Asn160 and Asn421.

The protein belongs to the glycosyltransferase 47 family.

It localises to the golgi apparatus membrane. Involved in the synthesis of glucuronoxylan hemicellulose in secondary cell walls. The sequence is that of Probable glucuronosyltransferase Os02g0520750 from Oryza sativa subsp. japonica (Rice).